A 239-amino-acid polypeptide reads, in one-letter code: Ribonuclease PH (239 aa).

Phosphate-binding positions include R86 and G124–R126.

It belongs to the RNase PH family. Homohexameric ring arranged as a trimer of dimers.

It carries out the reaction tRNA(n+1) + phosphate = tRNA(n) + a ribonucleoside 5'-diphosphate. Its function is as follows. Phosphorolytic 3'-5' exoribonuclease that plays an important role in tRNA 3'-end maturation. Removes nucleotide residues following the 3'-CCA terminus of tRNAs; can also add nucleotides to the ends of RNA molecules by using nucleoside diphosphates as substrates, but this may not be physiologically important. Probably plays a role in initiation of 16S rRNA degradation (leading to ribosome degradation) during starvation. The protein is Ribonuclease PH of Rhodopseudomonas palustris (strain BisB18).